A 490-amino-acid chain; its full sequence is Auxin transporter-like protein 5 (490 aa).

At methionine 1–glutamine 55 the chain is on the cytoplasmic side. The helical transmembrane segment at valine 56–leucine 73 threads the bilayer. The Extracellular segment spans residues serine 74–glycine 75. A helical transmembrane segment spans residues isoleucine 76–leucine 96. The Cytoplasmic segment spans residues tyrosine 97 to asparagine 132. A helical transmembrane segment spans residues valine 133 to cysteine 153. The Extracellular segment spans residues alanine 154–threonine 168. A helical membrane pass occupies residues tryptophan 169–tyrosine 189. Position 190 (arginine 190) is a topological domain, cytoplasmic. The chain crosses the membrane as a helical span at residues isoleucine 191–alanine 211. The Extracellular segment spans residues valine 212–lysine 227. A helical transmembrane segment spans residues isoleucine 228–threonine 248. The Cytoplasmic segment spans residues valine 249–lysine 262. The helical transmembrane segment at alanine 263–valine 283 threads the bilayer. Residues tyrosine 284 to alanine 310 are Extracellular-facing. The N-linked (GlcNAc...) asparagine glycan is linked to asparagine 293. The helical transmembrane segment at valine 311 to phenylalanine 331 threads the bilayer. Over valine 332–arginine 352 the chain is Cytoplasmic. The helical transmembrane segment at leucine 353–asparagine 373 threads the bilayer. The Extracellular portion of the chain corresponds to serine 374–valine 376. The chain crosses the membrane as a helical span at residues glycine 377 to phenylalanine 397. Over lysine 398–threonine 420 the chain is Cytoplasmic. The chain crosses the membrane as a helical span at residues phenylalanine 421–tryptophan 441. The Extracellular portion of the chain corresponds to alanine 442–histidine 490. N-linked (GlcNAc...) asparagine glycosylation occurs at asparagine 479.

This sequence belongs to the amino acid/polyamine transporter 2 family. Amino acid/auxin permease (AAAP) (TC 2.A.18.1) subfamily. Shoots and roots of nodulating plants, at low levels.

Its subcellular location is the cell membrane. Functionally, carrier protein involved in proton-driven auxin influx. Mediates the formation of auxin gradient from developing leaves (site of auxin biosynthesis) to tips by contributing to the loading of auxin in vascular tissues and facilitating acropetal (base to tip) auxin transport within inner tissues of the root apex, and basipetal (tip to base) auxin transport within outer tissues of the root apex. May be involved in lateral roots and nodules formation. This is Auxin transporter-like protein 5 (LAX5) from Medicago truncatula (Barrel medic).